The primary structure comprises 62 residues: Small ribosomal subunit protein bS21 (62 aa).

Belongs to the bacterial ribosomal protein bS21 family.

This Mycoplasma genitalium (strain ATCC 33530 / DSM 19775 / NCTC 10195 / G37) (Mycoplasmoides genitalium) protein is Small ribosomal subunit protein bS21 (rpsU).